Consider the following 43-residue polypeptide: Protein PsbN (43 aa).

Residues 5-25 (LILSIFIFSLLLGITSYSIYI) form a helical membrane-spanning segment.

The protein belongs to the PsbN family.

It localises to the plastid. The protein resides in the chloroplast thylakoid membrane. Functionally, may play a role in photosystem I and II biogenesis. In Cyanidium caldarium (Red alga), this protein is Protein PsbN.